The primary structure comprises 227 residues: Germin-like protein subfamily 1 member 6 (227 aa).

An N-terminal signal peptide occupies residues 1–25 (MMEVLLRLLVTQVILLALATSFVSC). A disulfide bridge links cysteine 35 with cysteine 51. In terms of domain architecture, Cupin type-1 spans 65–216 (SGLNIARNTT…AFQLDVKLVR (152 aa)). 2 N-linked (GlcNAc...) asparagine glycosylation sites follow: asparagine 72 and asparagine 80. The Mn(2+) site is built by histidine 113, histidine 115, glutamate 120, and histidine 162.

This sequence belongs to the germin family. In terms of assembly, oligomer (believed to be a pentamer but probably hexamer).

The protein localises to the secreted. It localises to the extracellular space. The protein resides in the apoplast. Functionally, may play a role in plant defense. Probably has no oxalate oxidase activity even if the active site is conserved. The chain is Germin-like protein subfamily 1 member 6 from Arabidopsis thaliana (Mouse-ear cress).